A 352-amino-acid polypeptide reads, in one-letter code: Elongation factor Ts (352 aa).

Residues 81-84 (TDFV) form an involved in Mg(2+) ion dislocation from EF-Tu region.

This sequence belongs to the EF-Ts family.

The protein localises to the cytoplasm. Its function is as follows. Associates with the EF-Tu.GDP complex and induces the exchange of GDP to GTP. It remains bound to the aminoacyl-tRNA.EF-Tu.GTP complex up to the GTP hydrolysis stage on the ribosome. This Campylobacter hominis (strain ATCC BAA-381 / DSM 21671 / CCUG 45161 / LMG 19568 / NCTC 13146 / CH001A) protein is Elongation factor Ts.